Here is a 252-residue protein sequence, read N- to C-terminus: 7-carboxy-7-deazaguanine synthase (252 aa).

Substrate contacts are provided by residues 22 to 24 and Arg37; that span reads LQG. The Radical SAM core domain maps to 28–251; sequence FVGEPQAFVR…QVHKLVDFIP (224 aa). Cys41, Cys45, and Cys48 together coordinate [4Fe-4S] cluster. Thr102 is a substrate binding site. Gly104 is a binding site for S-adenosyl-L-methionine.

Belongs to the radical SAM superfamily. 7-carboxy-7-deazaguanine synthase family. In terms of assembly, homodimer. [4Fe-4S] cluster serves as cofactor. Requires S-adenosyl-L-methionine as cofactor. Mg(2+) is required as a cofactor.

The enzyme catalyses 6-carboxy-5,6,7,8-tetrahydropterin + H(+) = 7-carboxy-7-deazaguanine + NH4(+). It participates in purine metabolism; 7-cyano-7-deazaguanine biosynthesis. Functionally, catalyzes the complex heterocyclic radical-mediated conversion of 6-carboxy-5,6,7,8-tetrahydropterin (CPH4) to 7-carboxy-7-deazaguanine (CDG), a step common to the biosynthetic pathways of all 7-deazapurine-containing compounds. The protein is 7-carboxy-7-deazaguanine synthase of Methanopyrus kandleri (strain AV19 / DSM 6324 / JCM 9639 / NBRC 100938).